The sequence spans 171 residues: Putative ankyrin repeat protein PA3287 (171 aa).

ANK repeat units follow at residues 48–77, 81–110, and 114–143; these read KGDSLLMLASYHGHADTVRLLLAYKADPDL, AGQTPLAGAAFKGDLAMVELLLAGGADVEG, and DGKTALMMAAMFNQAEVAASLLAHGARRDA.

The protein is Putative ankyrin repeat protein PA3287 of Pseudomonas aeruginosa (strain ATCC 15692 / DSM 22644 / CIP 104116 / JCM 14847 / LMG 12228 / 1C / PRS 101 / PAO1).